We begin with the raw amino-acid sequence, 408 residues long: Peptidoglycan muramidase Tse3 (408 aa).

Ca(2+) contacts are provided by N181, D253, Q254, E258, E375, S378, R379, D382, and N384.

In terms of assembly, forms a heterotetramer with Tsi3 consisting of two Tse3 dimers and two Tsi3 dimers. Formation of the complex inactivates Tse3 enzymatic activity. Ca(2+) serves as cofactor.

The protein localises to the host membrane. It is found in the secreted. The catalysed reaction is Hydrolysis of (1-&gt;4)-beta-linkages between N-acetylmuramic acid and N-acetyl-D-glucosamine residues in a peptidoglycan and between N-acetyl-D-glucosamine residues in chitodextrins.. Its activity is regulated as follows. Enzymatic activity depends on membrane binding. In terms of biological role, toxin secreted by the H1 type VI (H1-T6SS) secretion system into the periplasm of recipient cells. Degrades peptidoglycan via muramidase activity thereby helping itself to compete with other bacteria. To protect itself, the bacterium synthesizes immunity protein Tsi3 that specifically interacts with and inactivates cognate toxin. The chain is Peptidoglycan muramidase Tse3 from Pseudomonas aeruginosa (strain ATCC 15692 / DSM 22644 / CIP 104116 / JCM 14847 / LMG 12228 / 1C / PRS 101 / PAO1).